We begin with the raw amino-acid sequence, 522 residues long: Sorting nexin-1 (522 aa).

A disordered region spans residues 1–142; it reads MASGGGGCSA…ELEEEEQEDQ (142 aa). Phosphoserine occurs at positions 32 and 39. Residues 35 to 45 are compositionally biased toward acidic residues; it reads EAGDSDTEGED. Residues Thr-41 and Thr-48 each carry the phosphothreonine modification. Polar residues predominate over residues 55–65; it reads KPQSPKKTTSL. Ser-58 and Ser-72 each carry phosphoserine. Residues 71-80 are compositionally biased toward basic and acidic residues; sequence GSKENGIHEE. A compositionally biased stretch (polar residues) spans 98–107; the sequence is LDSTQNNQKT. A compositionally biased stretch (acidic residues) spans 132 to 142; the sequence is EELEEEEQEDQ. One can recognise a PX domain in the interval 143 to 272; that stretch reads FDLTVGITDP…EFLEKEELPR (130 aa). A 1,2-diacyl-sn-glycero-3-phospho-(1D-myo-inositol-3-phosphate)-binding residues include Arg-186, Ser-188, and Lys-214. Position 188 is a phosphoserine (Ser-188). Lys-237 carries the N6-acetyllysine modification. An a 1,2-diacyl-sn-glycero-3-phospho-(1D-myo-inositol-3-phosphate)-binding site is contributed by Arg-238. Ser-280 is modified (phosphoserine). Residues 281 to 298 form a membrane-binding amphipathic helix region; it reads GAGLLKMFNKATDAVSKM. A BAR domain is found at 302–522; the sequence is MNESDIWFEE…AFLPEARAIS (221 aa).

The protein belongs to the sorting nexin family. As to quaternary structure, predominantly forms heterodimers with BAR domain-containing sorting nexins SNX5, SNX6 and SNX32; can self-associate to form homodimers. The heterodimers are proposed to self-assemble into helical arrays on the membrane to stabilize and expand local membrane curvature underlying endosomal tubule formation. Thought to be a component of the originally described retromer complex (also called SNX-BAR retromer) which is a pentamer containing the heterotrimeric retromer cargo-selective complex (CSC), also described as vacuolar protein sorting subcomplex (VPS) and a heterodimeric membrane-deforming subcomplex formed between SNX1 or SNX2 and SNX5 or SNX6 (also called SNX-BAR subcomplex); the respective CSC and SNX-BAR subcomplexes associate with low affinity. Interacts with SNX5, SNX6, SNX32, VPS26A, VPS29, VPS35, DRD5, DENND5A, KALRN, RHOG (GDP-bound form). The interaction with SNX2 is reported controversially. Interacts with DNAJC13; prevented by presence of HGS. Interacts with HGS.

The protein localises to the endosome membrane. It localises to the golgi apparatus. Its subcellular location is the trans-Golgi network membrane. The protein resides in the early endosome membrane. It is found in the cell projection. The protein localises to the lamellipodium. In terms of biological role, involved in several stages of intracellular trafficking. Interacts with membranes containing phosphatidylinositol 3-phosphate (PtdIns(3P)) or phosphatidylinositol 3,5-bisphosphate (PtdIns(3,5)P2). Acts in part as component of the retromer membrane-deforming SNX-BAR subcomplex. The SNX-BAR retromer mediates retrograde transport of cargo proteins from endosomes to the trans-Golgi network (TGN) and is involved in endosome-to-plasma membrane transport for cargo protein recycling. The SNX-BAR subcomplex functions to deform the donor membrane into a tubular profile called endosome-to-TGN transport carrier (ETC). Can sense membrane curvature and has in vitro vesicle-to-membrane remodeling activity. Involved in retrograde endosome-to-TGN transport of lysosomal enzyme receptors (IGF2R, M6PR and SORT1). Plays a role in targeting ligand-activated EGFR to the lysosomes for degradation after endocytosis from the cell surface and release from the Golgi. Involvement in retromer-independent endocytic trafficking of P2RY1 and lysosomal degradation of protease-activated receptor-1/F2R. Promotes KALRN- and RHOG-dependent but retromer-independent membrane remodeling such as lamellipodium formation; the function is dependent on GEF activity of KALRN. Required for endocytosis of DRD5 upon agonist stimulation but not for basal receptor trafficking. The sequence is that of Sorting nexin-1 (Snx1) from Rattus norvegicus (Rat).